Consider the following 1401-residue polypeptide: MVPATFLENMQIKKVRVEKKSRKLTVVVSSFSSNAQKLSEFQSFLEESFPSLKEIKIVVESPSLSTVEEVLENWEKVVLELSEEYPSSLSFLKTCDVAKEGQNRITVKAPTYAIYEMAKSSKLDFAIREFLRNRYELNLDVELIFSEEGEEIAEKIIEEDIKAIEEVIQKDEKSKKEKSRSEENRVLLGKEMKAKPISIKDVSAETDEVVIEGEIFSIDFKELKSKVLMVFDITDYTSSILVKTFLTEEKYEILKDEIDVGTFVRLRGNVIYDKYEGDLVIDLKDLELIPPKKRMDLSEEKRVELHLHTQMSTLDAVPSATEVIKRAAEWGHKAVAITDHAVVQAFPEAMEASREYGVKVIYGMEGYMVDDGIPIVTGESEASLEGEFVVFDIETTGLSNINDEIIEIGAVKIKNKKIVDTFETFVNPQIPISSFITKLTGIDESMVKDAPLIEEVLPKFLEFAKGAVLVAHNANFDVSFIKSKAKKLGLTVENTVLDTLELSRHLYQDLKNYKLDTLAEFFEVKLLHHHRAVEDAKATAEIFIKMLEKLQEIGIKSVSEINSVLMEREVDVKKLPVYHVTILVKDQKGLRNLYEIISRSNLEFFHRTPRIPKSLLVKMREGLIIGSACEQGEVFRALVSNLEEKKLEDIINFYDYLEIQPVGNNEFLIERGEVRSVEELKEINRKIYELGKKYNKLVVATGDVHFLDPWDDVYRKILMAGKGYKDADRQPPLYFRTTEEMLMEFEYLGEEAAREVVIENPNKIAEIVEDVKPIPEGTFPPVIEGAEEELRRITLEKAHEIYGDPLPPIVQERLDRELNAIINNGYAVMYVIAQKLVSKSLQDGYLVGSRGSVGSSLVATMSGITEVNPLPPHYVCPKCKHSEFVTDGSFGCGVDMPDKYCPNCGTLMKKDGFDIPFEVFMGFEGDKEPDIDLNFSGEYQPIAHRYTEELFGKGHVFRAGTIGTLADKTAYGYVKKYFEERNLTVHKSEIKRLTMGCTGIKRTTGQHPGGVMVVPKDKSIYDFTPIQRPADAEDTDVITTHFDYHSLSGKLLKLDILGHDDPTVIRMLEDLTGVNARKIPLDDKKTMSLFTSVEALGIDPEELGTPVGTLGLPEFGTKFVRQMLIETRPTTFDELVRISGLSHGTDVWLNNAQDIIREGIATLKEVIAARDDIMLYLISKGMDKKLSFKIMENVRKGKGVTQEEIEEMKKHGVPDWFIQSCQKIKYMFPKAHAVAYVIMAFRIAYFKVYYPEAFYATYFTVRADDFNLDIVLGGKESIKRAIKEIEAKGNNATPKEKNLLTVLEVALEMYLRGIKFTNVDLYRSDAEKFLITEEGLLPPLNSLEGVGIQAAKAIAQERENGKFISIEDFRNRTRVSKTVIEILKQYGCLEDLPESNQLSLF.

Residues phenylalanine 388–phenylalanine 543 enclose the Exonuclease domain.

Belongs to the DNA polymerase type-C family. PolC subfamily.

The protein localises to the cytoplasm. The enzyme catalyses DNA(n) + a 2'-deoxyribonucleoside 5'-triphosphate = DNA(n+1) + diphosphate. Required for replicative DNA synthesis. This DNA polymerase also exhibits 3' to 5' exonuclease activity. This is DNA polymerase III PolC-type from Caldanaerobacter subterraneus subsp. tengcongensis (strain DSM 15242 / JCM 11007 / NBRC 100824 / MB4) (Thermoanaerobacter tengcongensis).